We begin with the raw amino-acid sequence, 135 residues long: UPF0225 protein CV_3559 (135 aa).

The protein belongs to the UPF0225 family.

This Chromobacterium violaceum (strain ATCC 12472 / DSM 30191 / JCM 1249 / CCUG 213 / NBRC 12614 / NCIMB 9131 / NCTC 9757 / MK) protein is UPF0225 protein CV_3559.